A 267-amino-acid chain; its full sequence is tRNA pseudouridine synthase A (267 aa).

The active-site Nucleophile is the Asp-51. Tyr-109 is a substrate binding site.

Belongs to the tRNA pseudouridine synthase TruA family. Homodimer.

The catalysed reaction is uridine(38/39/40) in tRNA = pseudouridine(38/39/40) in tRNA. In terms of biological role, formation of pseudouridine at positions 38, 39 and 40 in the anticodon stem and loop of transfer RNAs. The chain is tRNA pseudouridine synthase A from Staphylococcus epidermidis (strain ATCC 35984 / DSM 28319 / BCRC 17069 / CCUG 31568 / BM 3577 / RP62A).